Consider the following 512-residue polypeptide: 2-isopropylmalate synthase (512 aa).

One can recognise a Pyruvate carboxyltransferase domain in the interval 5–268 (LIIFDTTLRD…DLNIDTTHIV (264 aa)). Mn(2+) contacts are provided by D14, H202, H204, and N239. A regulatory domain region spans residues 394-512 (AFVSLSQHSE…SQAEKVAAQG (119 aa)).

Belongs to the alpha-IPM synthase/homocitrate synthase family. LeuA type 1 subfamily. As to quaternary structure, homodimer. Mn(2+) is required as a cofactor.

The protein localises to the cytoplasm. The catalysed reaction is 3-methyl-2-oxobutanoate + acetyl-CoA + H2O = (2S)-2-isopropylmalate + CoA + H(+). The protein operates within amino-acid biosynthesis; L-leucine biosynthesis; L-leucine from 3-methyl-2-oxobutanoate: step 1/4. Functionally, catalyzes the condensation of the acetyl group of acetyl-CoA with 3-methyl-2-oxobutanoate (2-ketoisovalerate) to form 3-carboxy-3-hydroxy-4-methylpentanoate (2-isopropylmalate). This Variovorax paradoxus (strain S110) protein is 2-isopropylmalate synthase.